Reading from the N-terminus, the 125-residue chain is Large ribosomal subunit protein bL20 (125 aa).

The protein belongs to the bacterial ribosomal protein bL20 family.

Binds directly to 23S ribosomal RNA and is necessary for the in vitro assembly process of the 50S ribosomal subunit. It is not involved in the protein synthesizing functions of that subunit. In Rhizorhabdus wittichii (strain DSM 6014 / CCUG 31198 / JCM 15750 / NBRC 105917 / EY 4224 / RW1) (Sphingomonas wittichii), this protein is Large ribosomal subunit protein bL20.